A 79-amino-acid polypeptide reads, in one-letter code: Small ribosomal subunit protein uS17 (79 aa).

Belongs to the universal ribosomal protein uS17 family. As to quaternary structure, part of the 30S ribosomal subunit.

Its function is as follows. One of the primary rRNA binding proteins, it binds specifically to the 5'-end of 16S ribosomal RNA. The sequence is that of Small ribosomal subunit protein uS17 from Rhizobium leguminosarum bv. trifolii (strain WSM2304).